Consider the following 394-residue polypeptide: Elongation factor Tu (394 aa).

In terms of domain architecture, tr-type G spans 10–204 (KPHVNVGTIG…AVDEWIPTPT (195 aa)). The segment at 19-26 (GHIDHGKT) is G1. 19–26 (GHIDHGKT) is a binding site for GTP. Residue Thr-26 coordinates Mg(2+). The interval 60–64 (GITIN) is G2. The tract at residues 81 to 84 (DCPG) is G3. GTP-binding positions include 81 to 85 (DCPGH) and 136 to 139 (NKCD). The G4 stretch occupies residues 136 to 139 (NKCD). Positions 174-176 (SAL) are G5.

This sequence belongs to the TRAFAC class translation factor GTPase superfamily. Classic translation factor GTPase family. EF-Tu/EF-1A subfamily. In terms of assembly, monomer.

Its subcellular location is the cytoplasm. It catalyses the reaction GTP + H2O = GDP + phosphate + H(+). In terms of biological role, GTP hydrolase that promotes the GTP-dependent binding of aminoacyl-tRNA to the A-site of ribosomes during protein biosynthesis. The polypeptide is Elongation factor Tu (Mycoplasma genitalium (strain ATCC 33530 / DSM 19775 / NCTC 10195 / G37) (Mycoplasmoides genitalium)).